The sequence spans 198 residues: Chromophore lyase CpcS/CpeS 2 (198 aa).

It belongs to the CpcS/CpeS biliprotein lyase family.

It is found in the plastid. Its subcellular location is the organellar chromatophore. In terms of biological role, covalently attaches a chromophore to Cys residue(s) of phycobiliproteins. The protein is Chromophore lyase CpcS/CpeS 2 of Paulinella chromatophora.